The following is a 294-amino-acid chain: MSEKLDSYKLMQEHQTWTSKPASLEEWQIVNEWAIAEKWDLGLGDTERFFNIDEEGFYLGYVNDEPVASVSVVNYTDEYAYAGFYLVAPGARGKGYGLRLSYDAFRHCDKRSVGLDGMPEQEENYKKGGFVTHYETSRLVGIHNQQVDAPDGVQNITADNIDEVIKFDEKITGYPRAALLKDWFSGEGRHGFVINSGDGVIGVVGIRRSTDGYRLGPLYSENQAVCDKLFAMALAQVPQGTQVTIDAPTLDLGFINGLKKMGFEEIFHTFRMYRGKEPQGEKHKIQAIASLELG.

The 130-residue stretch at 17–146 (WTSKPASLEE…SRLVGIHNQQ (130 aa)) folds into the N-acetyltransferase domain.

It catalyses the reaction marinoloyl-CoA C + holothin = thiomarinol C + CoA. It carries out the reaction pseudomonoyl-CoA C + holothin = pseudomonic acid C--holothin + CoA. It participates in antibiotic biosynthesis. In terms of biological role, acyltransferase that catalyzes the formation of pseudomonic acid C-holothin (PAC-holothin), a thiomarinol analog, from pseudomonoyl-CoA C (PAC-CoA) and holothin. Accepts linear CoA substrates of different lengths, including propionyl-, hexanoyl-, octanoyl-, oleoyl- and dodecanoyl-CoA, readily converting all into the corresponding acyl-holothin adducts. In vivo, is probably involved in the biosynthesis of thiomarinol, a naturally occurring double-headed antibiotic. In Pseudoalteromonas sp. (strain SANK 73390), this protein is Holothin acyltransferase.